Reading from the N-terminus, the 77-residue chain is Chassatide C2 (77 aa).

The first 24 residues, 1–24 (MAKFANYLMLFLLVASLVMLEAQS), serve as a signal peptide directing secretion. Positions 25 to 44 (SDTIKVPDLGKRLLMNRDPN) are cleaved as a propeptide — removed in mature form. The segment at residues 45-75 (GIPCAESCVWIPCTITALMGCSCKNNVCYNN) is a cross-link (cyclopeptide (Gly-Asn)). Cystine bridges form between cysteine 48/cysteine 65, cysteine 52/cysteine 67, and cysteine 57/cysteine 72. Position 63 is a methionine sulfoxide; in form chassatide chaC2A (methionine 63). Residues 76–77 (EL) constitute a propeptide, removed in mature form.

Belongs to the cyclotide family. Bracelet subfamily. This is a cyclic peptide. Expressed in fruit, pedicel and stem but not in leaf and root (at protein level).

Chassatide C2: Probably participates in a plant defense mechanism. Has no activity against bacteria up to a concentration of 80 uM. Has cytotoxic but no hemolytic activity. Functionally, chassatide C2A: Probably participates in a plant defense mechanism. Has no activity against bacteria up to a concentration of 80 uM. Has no cytotoxic and no hemolytic activity. The chain is Chassatide C2 from Chassalia chartacea (Chassalia curviflora).